Here is a 595-residue protein sequence, read N- to C-terminus: MQIIEIREPEQADFKQEQQIAVGIDFGTTNSLIAIAANRKVKVIKSIDDKELIPTTIDFTSNNFTIGNNKGLRSIKRLFGKTLKEILNTPALFSLVKDYLDVNSSELKLNFANKQLRVPEIAAEIFIYLKNQAEEQLKTNLTKAVITVPAHFNDAARGEVMLAAKIAGFEVLRLIAEPTAAAYAYGLNNNQKGCYLVYDLGGGTFDVSILNIQEGIFQVIATNGDNMLGGNDIDVVITQYLCNKFDLPNSIDTLQLAKKAKETLTYKDSFNNDNVSINKQTLEQLILPLVERTINIAQECLEQAGNPNIDGVILVGGATRTPLIKDELYKAFKIDILSDIDPDKAVVWGAALQAENLIAPHTNSLLIDVAPLSLGMELYGGIVEKIIMHNTPIPISVVKEFTTYVDNQTGIQFHILQGEREMAADCRSLARFELKGLPPMKAGYIRAEVTFSIDADGILSVSAYEKISNTSHAIEVKPNHGIDKTEIDIMLENAYKNAKIDYTTRLLQEAVIEAEALIFSIERAIAELTTLLSESEISIINSLLDNIKEAVHARDWILINNSIKEFKSKIKKSMDTKFNIIINDLLKGKNINQIK.

This sequence belongs to the heat shock protein 70 family.

Its function is as follows. Chaperone involved in the maturation of iron-sulfur cluster-containing proteins. Has a low intrinsic ATPase activity which is markedly stimulated by HscB. This Rickettsia peacockii (strain Rustic) protein is Chaperone protein HscA homolog.